We begin with the raw amino-acid sequence, 217 residues long: uncharacterized protein (217 aa).

Helical transmembrane passes span 151–171 and 177–197; these read LIPF…HSLF and ISFH…FILF.

The protein resides in the mitochondrion membrane. This is an uncharacterized protein from Schizosaccharomyces pombe (strain 972 / ATCC 24843) (Fission yeast).